Reading from the N-terminus, the 343-residue chain is MKKKWTLEETKMLFKKPFFNLMFQAQEEHRKNFDPNTIQISTLLSIKTGSCPEDCKYCPQSSRYKTGLKKEPLLEIEQILSAAKKAKDSGSSRFCMGAAWKNPKEKDMPYLEKIIKKIKEMGMETCMTLGTLNSTQAKKLADAGLDFYNHNLDTSKNFYSNIITTRTYQERLHTLHAVRSSGMKVCSGGIIGLGEKKQDRIELLIELSNLSIQPESVPINMLVKIPGTPMADNKDVEPFDFIRIIAVARIMMPKSYIRLSAGRHKMNDQTQAMCFMAGANSIFYGCKLLTSDNPEEKHDLELFKKLDLIPENKTQTLLKEDEYKTIIKSSKIKKDQYYNAAII.

Residues 36–254 (NTIQISTLLS…IAVARIMMPK (219 aa)) enclose the Radical SAM core domain. [4Fe-4S] cluster-binding residues include cysteine 51, cysteine 55, and cysteine 58. Cysteine 95, cysteine 126, cysteine 186, and arginine 258 together coordinate [2Fe-2S] cluster.

The protein belongs to the radical SAM superfamily. Biotin synthase family. In terms of assembly, homodimer. It depends on [4Fe-4S] cluster as a cofactor. [2Fe-2S] cluster is required as a cofactor.

It carries out the reaction (4R,5S)-dethiobiotin + (sulfur carrier)-SH + 2 reduced [2Fe-2S]-[ferredoxin] + 2 S-adenosyl-L-methionine = (sulfur carrier)-H + biotin + 2 5'-deoxyadenosine + 2 L-methionine + 2 oxidized [2Fe-2S]-[ferredoxin]. It functions in the pathway cofactor biosynthesis; biotin biosynthesis; biotin from 7,8-diaminononanoate: step 2/2. Functionally, catalyzes the conversion of dethiobiotin (DTB) to biotin by the insertion of a sulfur atom into dethiobiotin via a radical-based mechanism. The chain is Biotin synthase from Buchnera aphidicola subsp. Acyrthosiphon pisum (strain 5A).